The primary structure comprises 37 residues: Large ribosomal subunit protein bL36 (37 aa).

It belongs to the bacterial ribosomal protein bL36 family.

This chain is Large ribosomal subunit protein bL36 (rpmJ), found in Mycoplasma sp.